We begin with the raw amino-acid sequence, 533 residues long: tRNA(Ile)-lysidine synthase (533 aa).

27 to 32 (SGGSDS) serves as a coordination point for ATP.

Belongs to the tRNA(Ile)-lysidine synthase family.

The protein localises to the cytoplasm. The catalysed reaction is cytidine(34) in tRNA(Ile2) + L-lysine + ATP = lysidine(34) in tRNA(Ile2) + AMP + diphosphate + H(+). In terms of biological role, ligates lysine onto the cytidine present at position 34 of the AUA codon-specific tRNA(Ile) that contains the anticodon CAU, in an ATP-dependent manner. Cytidine is converted to lysidine, thus changing the amino acid specificity of the tRNA from methionine to isoleucine. The polypeptide is tRNA(Ile)-lysidine synthase (Rickettsia peacockii (strain Rustic)).